The following is a 428-amino-acid chain: Enolase (428 aa).

Residue glutamine 163 participates in (2R)-2-phosphoglycerate binding. Residue glutamate 205 is the Proton donor of the active site. Mg(2+)-binding residues include aspartate 243, glutamate 286, and aspartate 313. (2R)-2-phosphoglycerate is bound by residues lysine 338, arginine 367, serine 368, and lysine 389. Residue lysine 338 is the Proton acceptor of the active site.

This sequence belongs to the enolase family. It depends on Mg(2+) as a cofactor.

The protein resides in the cytoplasm. The protein localises to the secreted. It is found in the cell surface. The catalysed reaction is (2R)-2-phosphoglycerate = phosphoenolpyruvate + H2O. Its pathway is carbohydrate degradation; glycolysis; pyruvate from D-glyceraldehyde 3-phosphate: step 4/5. Catalyzes the reversible conversion of 2-phosphoglycerate (2-PG) into phosphoenolpyruvate (PEP). It is essential for the degradation of carbohydrates via glycolysis. This Polaromonas naphthalenivorans (strain CJ2) protein is Enolase.